The primary structure comprises 205 residues: Urease accessory protein UreE (205 aa).

The span at 170–192 (EHHGHSHSHSHDHDHDHDHDHQH) shows a compositional bias: basic and acidic residues. The tract at residues 170-205 (EHHGHSHSHSHDHDHDHDHDHQHGPCCSHGHHHGHR) is disordered.

The protein belongs to the UreE family.

The protein localises to the cytoplasm. Involved in urease metallocenter assembly. Binds nickel. Probably functions as a nickel donor during metallocenter assembly. This chain is Urease accessory protein UreE, found in Burkholderia pseudomallei (strain 668).